The following is a 297-amino-acid chain: Myoblast determination protein 1 homolog (297 aa).

A disordered region spans residues 52–76 (KPEEHPHHHGHHHGHPHEEEHVRAP). A bHLH domain is found at 101 to 152 (DRRKAATMRERRRLSKVNEAFETLKRCTSTNPNQRLPKVEILRNAIRYIESL). 2 disordered regions span residues 171–221 (SGES…GKSS) and 243–297 (CPIL…YQVL). Composition is skewed to polar residues over residues 174 to 184 (SDASSPRSNCS) and 258 to 297 (CSPQEGASLNDSGAQIPSPTNCTPLPQDSSSSSNPIYQVL).

In terms of assembly, efficient DNA binding requires dimerization with another bHLH protein. Seems to form active heterodimers with ITF-2.

It localises to the nucleus. In terms of biological role, acts as a transcriptional activator that promotes transcription of muscle-specific target genes and plays a role in muscle differentiation. Induces fibroblasts to differentiate into myoblasts. Interacts with and is inhibited by the twist protein. This interaction probably involves the basic domains of both proteins. This chain is Myoblast determination protein 1 homolog (MYOD1), found in Coturnix japonica (Japanese quail).